The following is a 158-amino-acid chain: NAD(P)H-quinone oxidoreductase subunit J, chloroplastic (158 aa).

The protein belongs to the complex I 30 kDa subunit family. In terms of assembly, NDH is composed of at least 16 different subunits, 5 of which are encoded in the nucleus.

Its subcellular location is the plastid. It is found in the chloroplast thylakoid membrane. The enzyme catalyses a plastoquinone + NADH + (n+1) H(+)(in) = a plastoquinol + NAD(+) + n H(+)(out). The catalysed reaction is a plastoquinone + NADPH + (n+1) H(+)(in) = a plastoquinol + NADP(+) + n H(+)(out). Its function is as follows. NDH shuttles electrons from NAD(P)H:plastoquinone, via FMN and iron-sulfur (Fe-S) centers, to quinones in the photosynthetic chain and possibly in a chloroplast respiratory chain. The immediate electron acceptor for the enzyme in this species is believed to be plastoquinone. Couples the redox reaction to proton translocation, and thus conserves the redox energy in a proton gradient. This chain is NAD(P)H-quinone oxidoreductase subunit J, chloroplastic, found in Nicotiana tabacum (Common tobacco).